The primary structure comprises 211 residues: Glycerol-3-phosphate acyltransferase (211 aa).

The next 5 membrane-spanning stretches (helical) occupy residues 5–25 (ALGMMLIAYLCGSVSSAILFC), 58–78 (VLVFDILKGMLPVWGAYALGV), 80–100 (PLYLGLTAIAACLGHIYPVFF), 112–132 (LGAIAPIGLDLTGLMTGTWLL), and 138–158 (GYSSLGAIVSALIAPFYVWWF).

This sequence belongs to the PlsY family. In terms of assembly, probably interacts with PlsX.

The protein resides in the cell inner membrane. The enzyme catalyses an acyl phosphate + sn-glycerol 3-phosphate = a 1-acyl-sn-glycero-3-phosphate + phosphate. The protein operates within lipid metabolism; phospholipid metabolism. In terms of biological role, catalyzes the transfer of an acyl group from acyl-phosphate (acyl-PO(4)) to glycerol-3-phosphate (G3P) to form lysophosphatidic acid (LPA). This enzyme utilizes acyl-phosphate as fatty acyl donor, but not acyl-CoA or acyl-ACP. The polypeptide is Glycerol-3-phosphate acyltransferase (Pectobacterium atrosepticum (strain SCRI 1043 / ATCC BAA-672) (Erwinia carotovora subsp. atroseptica)).